The following is a 320-amino-acid chain: MATPTIKLNSGFDMPLVGFGLWKVNNDTCADQVYEAIKAGYRLFDGACDYGNEVEAGQGVARAIKEGIVKREELFIVSKLWNSFHDGDKVEPICRKQLADWGVDYFDLYIVHFPVALKYVDPAVRYPPGWSAKGDGSIEFSNASIQETWTAMETLVDKKLARSIGVSNFSAQLLMDLLRYARVRPATLQIEHHPYLTQPRLVEYAQKEGIAVTAYSSFGPLSFLELQVPNATNISPLFEHDVVKSVADKHGKTPAQVLLRWSTQRGIAVIPKSNNPTRLSQNLEVTGWDLEQSEIDAISALDIGLRFNDPIGYGMYVPIF.

Tyr50 (proton donor) is an active-site residue. His112 lines the substrate pocket. Residues 167–168, 216–225, and 272–282 each bind NAD(+); these read SN, SSFGPLSFLE, and KSNNPTRLSQN.

It belongs to the aldo/keto reductase family.

The catalysed reaction is xylitol + NAD(+) = D-xylose + NADH + H(+). It carries out the reaction xylitol + NADP(+) = D-xylose + NADPH + H(+). It participates in carbohydrate metabolism; D-xylose degradation. Functionally, catalyzes the initial reaction in the xylose utilization pathway by reducing D-xylose into xylitol. Xylose is a major component of hemicelluloses such as xylan. Most fungi utilize D-xylose via three enzymatic reactions, xylose reductase (XR), xylitol dehydrogenase (XDH), and xylulokinase, to form xylulose 5-phosphate, which enters pentose phosphate pathway. This Aspergillus terreus (strain NIH 2624 / FGSC A1156) protein is Probable NAD(P)H-dependent D-xylose reductase xyl1 (xyl1).